The chain runs to 154 residues: MRIIEGNLVGTGLKIGIVVSRFNEFITGKLLSGAIDGLTRHGVSDSDITVAWVPGAFEIPLVAKKMAESKQFDAVITLGAVIRGATSHFDYVCSEAAKGVSHAALASGVPVIFGVLTTDTIEQAIERAGTKAGNKGWEAAVSAIEMANVLRTLA.

Residues phenylalanine 22, 56–58 (AFE), and 80–82 (AVI) contribute to the 5-amino-6-(D-ribitylamino)uracil site. Residue 85–86 (AT) coordinates (2S)-2-hydroxy-3-oxobutyl phosphate. Histidine 88 serves as the catalytic Proton donor. Phenylalanine 113 is a 5-amino-6-(D-ribitylamino)uracil binding site. Arginine 127 serves as a coordination point for (2S)-2-hydroxy-3-oxobutyl phosphate.

This sequence belongs to the DMRL synthase family. Forms an icosahedral capsid composed of 60 subunits, arranged as a dodecamer of pentamers.

It catalyses the reaction (2S)-2-hydroxy-3-oxobutyl phosphate + 5-amino-6-(D-ribitylamino)uracil = 6,7-dimethyl-8-(1-D-ribityl)lumazine + phosphate + 2 H2O + H(+). Its pathway is cofactor biosynthesis; riboflavin biosynthesis; riboflavin from 2-hydroxy-3-oxobutyl phosphate and 5-amino-6-(D-ribitylamino)uracil: step 1/2. Catalyzes the formation of 6,7-dimethyl-8-ribityllumazine by condensation of 5-amino-6-(D-ribitylamino)uracil with 3,4-dihydroxy-2-butanone 4-phosphate. This is the penultimate step in the biosynthesis of riboflavin. This Geobacillus kaustophilus (strain HTA426) protein is 6,7-dimethyl-8-ribityllumazine synthase.